The following is a 353-amino-acid chain: 3-isopropylmalate dehydrogenase (353 aa).

Arg97, Arg107, Arg135, and Asp219 together coordinate substrate. Mg(2+)-binding residues include Asp219, Asp243, and Asp247.

This sequence belongs to the isocitrate and isopropylmalate dehydrogenases family. LeuB type 1 subfamily. Homodimer. Mg(2+) serves as cofactor. It depends on Mn(2+) as a cofactor.

The protein resides in the cytoplasm. It carries out the reaction (2R,3S)-3-isopropylmalate + NAD(+) = 4-methyl-2-oxopentanoate + CO2 + NADH. The protein operates within amino-acid biosynthesis; L-leucine biosynthesis; L-leucine from 3-methyl-2-oxobutanoate: step 3/4. Its function is as follows. Catalyzes the oxidation of 3-carboxy-2-hydroxy-4-methylpentanoate (3-isopropylmalate) to 3-carboxy-4-methyl-2-oxopentanoate. The product decarboxylates to 4-methyl-2 oxopentanoate. The protein is 3-isopropylmalate dehydrogenase of Bacteroides fragilis (strain ATCC 25285 / DSM 2151 / CCUG 4856 / JCM 11019 / LMG 10263 / NCTC 9343 / Onslow / VPI 2553 / EN-2).